The chain runs to 332 residues: L-lactate dehydrogenase A chain (332 aa).

Position 2 is an N-acetylalanine (Ala2). At Lys5 the chain carries N6-acetyllysine; alternate. At Lys5 the chain carries N6-succinyllysine; alternate. Lys14 is modified (N6-acetyllysine). Residue Thr18 is modified to Phosphothreonine. Residue 29–57 (GAVGMACAISILMKDLADELALVDVIEDK) coordinates NAD(+). Lys57 carries the post-translational modification N6-acetyllysine; alternate. Residue Lys57 forms a Glycyl lysine isopeptide (Lys-Gly) (interchain with G-Cter in SUMO2); alternate linkage. An N6-acetyllysine modification is found at Lys81. Position 99 (Arg99) interacts with NAD(+). Arg106 contacts substrate. Lys118 bears the N6-acetyllysine; alternate mark. N6-succinyllysine; alternate is present on Lys118. Position 126 is an N6-acetyllysine (Lys126). Positions 138 and 169 each coordinate substrate. His193 acts as the Proton acceptor in catalysis. N6-acetyllysine is present on residues Lys224 and Lys232. Phosphotyrosine is present on Tyr239. N6-acetyllysine is present on Lys243. Substrate is bound at residue Thr248. Phosphothreonine is present on Thr309. The residue at position 310 (Ser310) is a Phosphoserine. An N6-acetyllysine; alternate modification is found at Lys318. Residue Lys318 is modified to N6-succinyllysine; alternate. Thr322 bears the Phosphothreonine mark.

It belongs to the LDH/MDH superfamily. LDH family. Homotetramer. Interacts with PTEN upstream reading frame protein MP31. Post-translationally, ISGylated.

The protein localises to the cytoplasm. It carries out the reaction (S)-lactate + NAD(+) = pyruvate + NADH + H(+). It participates in fermentation; pyruvate fermentation to lactate; (S)-lactate from pyruvate: step 1/1. Its function is as follows. Interconverts simultaneously and stereospecifically pyruvate and lactate with concomitant interconversion of NADH and NAD(+). This Pongo abelii (Sumatran orangutan) protein is L-lactate dehydrogenase A chain (LDHA).